We begin with the raw amino-acid sequence, 1401 residues long: DNA-directed RNA polymerase subunit beta' (1401 aa).

Residues Cys70, Cys72, Cys85, and Cys88 each coordinate Zn(2+). 3 residues coordinate Mg(2+): Asp460, Asp462, and Asp464. 4 residues coordinate Zn(2+): Cys808, Cys882, Cys889, and Cys892.

Belongs to the RNA polymerase beta' chain family. The RNAP catalytic core consists of 2 alpha, 1 beta, 1 beta' and 1 omega subunit. When a sigma factor is associated with the core the holoenzyme is formed, which can initiate transcription. Mg(2+) is required as a cofactor. It depends on Zn(2+) as a cofactor.

It catalyses the reaction RNA(n) + a ribonucleoside 5'-triphosphate = RNA(n+1) + diphosphate. DNA-dependent RNA polymerase catalyzes the transcription of DNA into RNA using the four ribonucleoside triphosphates as substrates. This is DNA-directed RNA polymerase subunit beta' from Legionella pneumophila subsp. pneumophila (strain Philadelphia 1 / ATCC 33152 / DSM 7513).